Here is a 331-residue protein sequence, read N- to C-terminus: DNA-directed RNA polymerase subunit alpha (331 aa).

Residues 1–230 (MKNIKTSPYI…KQMSVFNSEW (230 aa)) form an alpha N-terminal domain (alpha-NTD) region. An alpha C-terminal domain (alpha-CTD) region spans residues 247–331 (LKPLLQKIEA…ALQKRLNKLK (85 aa)).

It belongs to the RNA polymerase alpha chain family. As to quaternary structure, homodimer. The RNAP catalytic core consists of 2 alpha, 1 beta/beta' and 1 omega subunit. When a sigma factor is associated with the core the holoenzyme is formed, which can initiate transcription.

It carries out the reaction RNA(n) + a ribonucleoside 5'-triphosphate = RNA(n+1) + diphosphate. Functionally, DNA-dependent RNA polymerase catalyzes the transcription of DNA into RNA using the four ribonucleoside triphosphates as substrates. This chain is DNA-directed RNA polymerase subunit alpha, found in Wolinella succinogenes (strain ATCC 29543 / DSM 1740 / CCUG 13145 / JCM 31913 / LMG 7466 / NCTC 11488 / FDC 602W) (Vibrio succinogenes).